The following is a 246-amino-acid chain: MNDRIIEFDPLIEGVLIKRYKRFLADIKLESGDVVTAHCANTGPMKGLLTEGAKVRISVSHSPKRKLPFTWEQICVLDSKNDEVWVGINTLFANKLIKKVIAKNLLREIIGEVETIQSEIPYGKDKKSRIDFFLTPKSSNPDKRNIYIEVKNTTWIKDNIALFPDTVTKRGQKHLIELKELIPESKSVLVLCITRKDACFFAPGDEADPLYGNLFRESLSAGMIPIPCSFEFYKDHVRWNGIKPLK.

This sequence belongs to the SfsA family.

In Prochlorococcus marinus (strain MIT 9215), this protein is Sugar fermentation stimulation protein homolog.